The primary structure comprises 292 residues: Elongation factor Ts (292 aa).

Positions 79–82 are involved in Mg(2+) ion dislocation from EF-Tu; sequence TDFV.

It belongs to the EF-Ts family.

Its subcellular location is the cytoplasm. Functionally, associates with the EF-Tu.GDP complex and induces the exchange of GDP to GTP. It remains bound to the aminoacyl-tRNA.EF-Tu.GTP complex up to the GTP hydrolysis stage on the ribosome. The chain is Elongation factor Ts from Xanthomonas campestris pv. campestris (strain ATCC 33913 / DSM 3586 / NCPPB 528 / LMG 568 / P 25).